The chain runs to 534 residues: CTP synthase (534 aa).

An amidoligase domain region spans residues 1–267 (MSKYIVVTGG…GSYILNRLNI (267 aa)). S13 contributes to the CTP binding site. UTP is bound at residue S13. Residue 14–19 (SIGKGI) coordinates ATP. L-glutamine is bound at residue Y54. ATP is bound at residue D71. D71 and E141 together coordinate Mg(2+). CTP-binding positions include 148 to 150 (DIE), 188 to 193 (KTKPTQ), and K224. UTP-binding positions include 188–193 (KTKPTQ) and K224. One can recognise a Glutamine amidotransferase type-1 domain in the interval 294-532 (KIAVVGKYIE…IKAAKNKKQN (239 aa)). Position 353 (G353) interacts with L-glutamine. The Nucleophile; for glutamine hydrolysis role is filled by C380. Residues 381–384 (LGLH), E403, and R460 each bind L-glutamine. Active-site residues include H505 and E507.

Belongs to the CTP synthase family. As to quaternary structure, homotetramer.

The catalysed reaction is UTP + L-glutamine + ATP + H2O = CTP + L-glutamate + ADP + phosphate + 2 H(+). The enzyme catalyses L-glutamine + H2O = L-glutamate + NH4(+). It catalyses the reaction UTP + NH4(+) + ATP = CTP + ADP + phosphate + 2 H(+). Its pathway is pyrimidine metabolism; CTP biosynthesis via de novo pathway; CTP from UDP: step 2/2. Allosterically activated by GTP, when glutamine is the substrate; GTP has no effect on the reaction when ammonia is the substrate. The allosteric effector GTP functions by stabilizing the protein conformation that binds the tetrahedral intermediate(s) formed during glutamine hydrolysis. Inhibited by the product CTP, via allosteric rather than competitive inhibition. Catalyzes the ATP-dependent amination of UTP to CTP with either L-glutamine or ammonia as the source of nitrogen. Regulates intracellular CTP levels through interactions with the four ribonucleotide triphosphates. The protein is CTP synthase of Methanosphaera stadtmanae (strain ATCC 43021 / DSM 3091 / JCM 11832 / MCB-3).